We begin with the raw amino-acid sequence, 553 residues long: 5'-nucleotidase domain-containing protein 2 (553 aa).

Residues Ser26–Pro51 form a disordered region. The Nucleophile role is filled by Asp106. The Mg(2+) site is built by Asp106, Asp108, and Asp391. Catalysis depends on Asp108, which acts as the Proton donor.

The protein belongs to the 5'(3')-deoxyribonucleotidase family. In terms of assembly, interacts with tyrosine 3-monooxygenase TH; the interaction results in reduced phosphorylation and decreased catalytic activity of TH. In terms of tissue distribution, expressed in eye iridocorneal angle.

It localises to the cytoplasm. Its function is as follows. Promotes dephosphorylation of tyrosine 3-monooxygenase TH which decreases TH catalytic activity and leads to reduced synthesis of catecholamines including dopamine, noradrenaline and adrenaline. The exact mechanism of activity is unknown but may act as a phosphatase or promote the activity of phosphatases or may inhibit phosphorylation by acting as a barrier to interfere with protein kinase access. The protein is 5'-nucleotidase domain-containing protein 2 (Nt5dc2) of Rattus norvegicus (Rat).